Reading from the N-terminus, the 424-residue chain is Tyrosine--tRNA ligase (424 aa).

An L-tyrosine-binding site is contributed by Tyr-37. The short motif at Pro-42 to His-51 is the 'HIGH' region element. Lys-144 carries the N6-acetyllysine modification. L-tyrosine is bound by residues Tyr-175 and Gln-179. The short motif at Lys-235–Thr-239 is the 'KMSKS' region element. Lys-238 lines the ATP pocket. An S4 RNA-binding domain is found at Ala-357–Gly-414.

The protein belongs to the class-I aminoacyl-tRNA synthetase family. TyrS type 1 subfamily. Homodimer.

Its subcellular location is the cytoplasm. It catalyses the reaction tRNA(Tyr) + L-tyrosine + ATP = L-tyrosyl-tRNA(Tyr) + AMP + diphosphate + H(+). Its function is as follows. Catalyzes the attachment of tyrosine to tRNA(Tyr) in a two-step reaction: tyrosine is first activated by ATP to form Tyr-AMP and then transferred to the acceptor end of tRNA(Tyr). The sequence is that of Tyrosine--tRNA ligase from Escherichia coli O8 (strain IAI1).